The sequence spans 485 residues: Auxin transporter protein 1 (485 aa).

Residues 1–59 lie on the Cytoplasmic side of the membrane; the sequence is MSEGVEAIVANDNGTDQVNGNRTGKDNEEHDGSTGSNLSNFLWHGGSVWDAWFSCASNQ. Over residues 12 to 22 the composition is skewed to polar residues; the sequence is DNGTDQVNGNR. Positions 12-33 are disordered; sequence DNGTDQVNGNRTGKDNEEHDGS. Residues 23-32 show a composition bias toward basic and acidic residues; sequence TGKDNEEHDG. A helical transmembrane segment spans residues 60-77; it reads VAQVLLTLPYSFSQLGML. Over 78-79 the chain is Extracellular; sequence SG. A helical membrane pass occupies residues 80–100; the sequence is IVLQIFYGLLGSWTAYLISVL. Over 101-135 the chain is Cytoplasmic; that stretch reads YVEYRARKEKEGKSFKNHVIQWFEVLDGLLGSYWK. The helical transmembrane segment at 136–156 threads the bilayer; that stretch reads ALGLAFNCTFLLFGSVIQLIA. Topologically, residues 157-172 are extracellular; sequence CASNIYYINDHLDKRT. A helical membrane pass occupies residues 173 to 193; that stretch reads WTYIFGACCATTVFIPSFHNY. Residues 194-196 are Cytoplasmic-facing; sequence RIW. A helical transmembrane segment spans residues 197-217; the sequence is SFLGLGMTTYTAWYLAIASII. The Extracellular portion of the chain corresponds to 218–232; the sequence is HGQAEGVKHSGPTKL. A helical membrane pass occupies residues 233-253; that stretch reads VLYFTGATNILYTFGGHAVTV. The Cytoplasmic portion of the chain corresponds to 254–266; it reads EIMHAMWKPQKFK. Residues 267-287 traverse the membrane as a helical segment; it reads YIYLMATLYVFTLTIPSAAAV. At 288 to 314 the chain is on the extracellular side; the sequence is YWAFGDALLDHSNAFSLMPKNAWRDAA. A helical transmembrane segment spans residues 315–335; the sequence is VILMLIHQFITFGFACTPLYF. Residues 336-356 lie on the Cytoplasmic side of the membrane; that stretch reads VWEKVIGMHDTKSICLRALAR. The chain crosses the membrane as a helical span at residues 357–377; that stretch reads LPVVIPIWFLAIIFPFFGPIN. Residue Ser378 is a topological domain, extracellular. Residues 379–399 form a helical membrane-spanning segment; it reads AVGALLVSFTVYIIPSLAHML. The Cytoplasmic segment spans residues 400–425; the sequence is TYRSASARQNAAEKPPFFMPSWTAMY. A helical transmembrane segment spans residues 426-446; it reads VLNAFVVVWVLIVGFGFGGWA. Over 447-485 the chain is Extracellular; sequence SVTNFVRQVDTFGLFAKCYQCKPAAAAAHAPVSALHHRL.

This sequence belongs to the amino acid/polyamine transporter 2 family. Amino acid/auxin permease (AAAP) (TC 2.A.18.1) subfamily. Expressed in root and shoot apical tissues. In root apex, confined to stele initials, protophloem poles, statolith-containing S2 columella cells, lateral root cap cells (LRC), and in epidermal cells from the distal elongation zone (DEZ) up to central elongation zone (CEZ).

It localises to the cell membrane. With respect to regulation, auxin uptake mediated by AUX1 is inhibited by chromosaponin-1 (CSI), 1-naphthoxyacetic acid (1-NOA) and 3-chloro-4-hydroxyphenylacetic acid (CHPAA). Carrier protein involved in proton-driven auxin influx. Mediates the formation of auxin gradient from developing leaves (site of auxin biosynthesis) to tips by contributing to the loading of auxin in vascular tissues and facilitating acropetal (base to tip) auxin transport within inner tissues of the root apex, and basipetal (tip to base) auxin transport within outer tissues of the root apex. Unloads auxin from the mature phloem to deliver the hormone to the root meristem via the protophloem cell files. Coordinated subcellular localization of AUX1 is regulated by a brefeldin A-sensitive (BFA) vesicle trafficking process. Involved in lateral root formation, trichoblast polarization and root hair elongation. Required for gravitropism and thigmotropism, especially in roots, by modulating responses to auxin, ethylene and cytokinins such as benzyladenine (BA). Needed for ammonium-mediated root-growth inhibition. Confers sensitivity to the herbicide 2,4-dichlorophenoxyacetic acid (2,4-D, auxin analog), and to polar auxin transport inhibitors such as N-1-naphthylphthalamic acid (NPA) and 2,3,5-triiodobenzoic acid (TIBA). The protein is Auxin transporter protein 1 (AUX1) of Arabidopsis thaliana (Mouse-ear cress).